The primary structure comprises 303 residues: Quinolinate synthase (303 aa).

Residues His25 and Ser42 each coordinate iminosuccinate. Position 87 (Cys87) interacts with [4Fe-4S] cluster. Iminosuccinate-binding positions include 113-115 (YVN) and Ser130. Cys174 is a [4Fe-4S] cluster binding site. Residues 200-202 (HPE) and Thr217 each bind iminosuccinate. A [4Fe-4S] cluster-binding site is contributed by Cys260.

This sequence belongs to the quinolinate synthase family. Type 2 subfamily. Homodimer. The cofactor is [4Fe-4S] cluster.

Its subcellular location is the cytoplasm. It catalyses the reaction iminosuccinate + dihydroxyacetone phosphate = quinolinate + phosphate + 2 H2O + H(+). It functions in the pathway cofactor biosynthesis; NAD(+) biosynthesis; quinolinate from iminoaspartate: step 1/1. In terms of biological role, catalyzes the condensation of iminoaspartate with dihydroxyacetone phosphate to form quinolinate. The polypeptide is Quinolinate synthase (Pyrococcus furiosus (strain ATCC 43587 / DSM 3638 / JCM 8422 / Vc1)).